Reading from the N-terminus, the 564-residue chain is Poly(U)-binding-splicing factor PUF60 (564 aa).

The tract at residues 1-521 is inhibits homodimerization; it reads MATATIALQV…EDAEIIVKIF (521 aa). The tract at residues 37–61 is disordered; sequence KWKPPQGTESIKMENGQSTGTKLGL. K48 participates in a covalent cross-link: Glycyl lysine isopeptide (Lys-Gly) (interchain with G-Cter in SUMO2). T65 is modified (phosphothreonine). The segment at 82-564 is inhibits transcriptional repression, interaction with ERCC3 and apoptosis induction; sequence QSIKSVLVKQ…ERFDNSDLSA (483 aa). K85 is covalently cross-linked (Glycyl lysine isopeptide (Lys-Gly) (interchain with G-Cter in SUMO2)). Residue S117 is modified to Phosphoserine. 2 consecutive RRM domains span residues 134-212 and 231-309; these read CRVY…RPSN and NRIY…KAVT. Residue S249 is modified to Phosphoserine. K256 is modified (N6-acetyllysine). T319 carries the post-translational modification Phosphothreonine. The tract at residues 421–442 is disordered; that stretch reads KKEKEEEELFPESERPEMLSEQ. Residue K424 forms a Glycyl lysine isopeptide (Lys-Gly) (interchain with G-Cter in SUMO2) linkage. Residues 432–442 are compositionally biased toward basic and acidic residues; sequence ESERPEMLSEQ. K459 is subject to N6-acetyllysine. A Glycyl lysine isopeptide (Lys-Gly) (interchain with G-Cter in SUMO2) cross-link involves residue K463. The region spanning 467–554 is the RRM 3; atypical domain; the sequence is TVMVLRNMVD…RKVVAEVYDQ (88 aa).

It belongs to the RRM half pint family. In terms of assembly, homodimer. Associates with the spliceosome. Found in a complex with RO60 and Y5 RNA. Found in a complex with FUBP1 and far upstream element (FUSE) DNA segment. Interacts directly with ERCC3. Interacts with CDK7 and GTF2H1. Interacts with SRSF11/P54. Interacts with ARGLU1; interaction may be involved in ARGLU1-mediated modulation of alternative splicing.

It localises to the nucleus. In terms of biological role, DNA- and RNA-binding protein, involved in several nuclear processes such as pre-mRNA splicing, apoptosis and transcription regulation. In association with FUBP1 regulates MYC transcription at the P2 promoter through the core-TFIIH basal transcription factor. Acts as a transcriptional repressor through the core-TFIIH basal transcription factor. Represses FUBP1-induced transcriptional activation but not basal transcription. Decreases ERCC3 helicase activity. Is also involved in pre-mRNA splicing. Promotes splicing of an intron with weak 3'-splice site and pyrimidine tract in a cooperative manner with U2AF2. Involved in apoptosis induction when overexpressed in HeLa cells. Modulates alternative splicing of several mRNAs. Binds to relaxed DNA of active promoter regions. Binds to the pyrimidine tract and 3'-splice site regions of pre-mRNA; binding is enhanced in presence of U2AF2. Binds to Y5 RNA in association with RO60. Binds to poly(U) RNA. This is Poly(U)-binding-splicing factor PUF60 from Rattus norvegicus (Rat).